A 382-amino-acid chain; its full sequence is Queuine tRNA-ribosyltransferase (382 aa).

Residue Asp93 is the Proton acceptor of the active site. Substrate-binding positions include 93-97 (DSGGF), Asp147, Gln191, and Gly218. The tract at residues 249-255 (GVGKPED) is RNA binding. The Nucleophile role is filled by Asp268. Residues 273-277 (TRNAR) form an RNA binding; important for wobble base 34 recognition region. Residues Cys306, Cys308, Cys311, and His337 each coordinate Zn(2+).

This sequence belongs to the queuine tRNA-ribosyltransferase family. In terms of assembly, homodimer. Within each dimer, one monomer is responsible for RNA recognition and catalysis, while the other monomer binds to the replacement base PreQ1. Requires Zn(2+) as cofactor.

The enzyme catalyses 7-aminomethyl-7-carbaguanine + guanosine(34) in tRNA = 7-aminomethyl-7-carbaguanosine(34) in tRNA + guanine. The protein operates within tRNA modification; tRNA-queuosine biosynthesis. In terms of biological role, catalyzes the base-exchange of a guanine (G) residue with the queuine precursor 7-aminomethyl-7-deazaguanine (PreQ1) at position 34 (anticodon wobble position) in tRNAs with GU(N) anticodons (tRNA-Asp, -Asn, -His and -Tyr). Catalysis occurs through a double-displacement mechanism. The nucleophile active site attacks the C1' of nucleotide 34 to detach the guanine base from the RNA, forming a covalent enzyme-RNA intermediate. The proton acceptor active site deprotonates the incoming PreQ1, allowing a nucleophilic attack on the C1' of the ribose to form the product. After dissociation, two additional enzymatic reactions on the tRNA convert PreQ1 to queuine (Q), resulting in the hypermodified nucleoside queuosine (7-(((4,5-cis-dihydroxy-2-cyclopenten-1-yl)amino)methyl)-7-deazaguanosine). This chain is Queuine tRNA-ribosyltransferase, found in Actinobacillus pleuropneumoniae serotype 5b (strain L20).